The sequence spans 668 residues: MTLYDENNLHIIKDNLRYLKLLSKQYPSISSASSEIINLQAILNLPKGTEHFISDVHGEYESFTHMLKNASGVIKRKIDDVFGTSLRECDKKNLATLIYYPEQKLDLIKKSEKNLEDWYKITLYRLIRLCQIVSSKYTRSKVRKSLPSDFAYIIEELLNEQGDRVDKQEYYNSIIETIIDIDRASEFIIAISNVIQRLVVDKLHIIGDIYDRGPGAEIIIEALSKHHSIDIQWGNHDIVWMGAAAGCEACIANVIRISLRYANLSTLEDGYGINLLPLATFAMDFYKEDNCENFKPRTIDKNLNETDIKLLSKMHKAISIIQFKLEGKIIKRRPEFKMEERLLLDKINIKEGTLNLSEKIYKLIDTNFPTLDKENPYELNERERDLVEKLTNSFINSEKLQRHIKFLYSNGSLYLKYNSNLLYHGCIPLNEDGSLKEVTLCKETLKGKSLLDKLDRLAREAYFFKKDPESKLYGMDMMWYLWCGSNSPLFGKKKMTTFERYFLDDKNTHKEEKNPYYKYRNDEKMCTMIFEEFELDADNSHIINGHIPVKTKEGENPIKANGKLLVIDGGFCKAYQPQTGIAGYTLIYNSYGLLLTSHEPFSSIHKAIVEGNDILSSTTILEHVSSRKRVLDTDSGEEIKKQIHDLEMLLVAYRKGLIKEENEANIRF.

Belongs to the FBPase class 3 family. It depends on Mn(2+) as a cofactor.

It catalyses the reaction beta-D-fructose 1,6-bisphosphate + H2O = beta-D-fructose 6-phosphate + phosphate. The protein operates within carbohydrate biosynthesis; gluconeogenesis. This chain is Fructose-1,6-bisphosphatase class 3, found in Clostridium botulinum (strain Okra / Type B1).